The sequence spans 234 residues: Small ribosomal subunit protein uS3 (234 aa).

In terms of domain architecture, KH type-2 spans 39–107 (IRKFLKKELY…EVSINIKEVK (69 aa)).

Belongs to the universal ribosomal protein uS3 family. Part of the 30S ribosomal subunit. Forms a tight complex with proteins S10 and S14.

Its function is as follows. Binds the lower part of the 30S subunit head. Binds mRNA in the 70S ribosome, positioning it for translation. The chain is Small ribosomal subunit protein uS3 from Helicobacter pylori (strain J99 / ATCC 700824) (Campylobacter pylori J99).